Here is a 909-residue protein sequence, read N- to C-terminus: Golgin subfamily A member 6-like protein 2 (909 aa).

The span at 1–11 (MWPQPHLPPHP) shows a compositional bias: pro residues. Disordered stretches follow at residues 1 to 88 (MWPQ…ASHQ), 300 to 362 (ERLR…EQEE), 381 to 408 (QEKQMREQEQKMRDQEERMWEQDERLRE), 425 to 494 (KMRE…QRLP), and 524 to 909 (EEMW…QSSL). Residues 13-31 (MSEKTRQNKLAEAKKKFTD) are compositionally biased toward basic and acidic residues. Positions 53-77 (NNGTNPETTTSEGCHSPEDTQQNRA) are enriched in polar residues. Residues 78 to 88 (QLKEEKKASHQ) are compositionally biased toward basic and acidic residues. The stretch at 192–526 (HKKADRYIEE…EEKIRDQEEM (335 aa)) forms a coiled coil. 2 stretches are compositionally biased toward basic and acidic residues: residues 425–478 (KMRE…KQEE) and 524–542 (EEMWGQEKKMWRQEKMREQ). A compositionally biased stretch (acidic residues) spans 607–620 (AGGEEDAGAGEEDM). Composition is skewed to gly residues over residues 641-654 (GGGGDDAGAGGEDA) and 676-689 (GAGGEDVGAGGEDV). The span at 692-719 (GRRRCGSSRGCRNRRRSCGNTRRCRSRR) shows a compositional bias: basic residues. Low complexity predominate over residues 746 to 755 (AGAEDVAAGG). A compositionally biased stretch (acidic residues) spans 757 to 766 (DAGEEEDAGG). A compositionally biased stretch (gly residues) spans 791 to 871 (GAGGEDVGAG…AGGEDVGAGG (81 aa)). The segment covering 872 to 892 (DAREGGEDTRSEREDAGEAAR) has biased composition (basic and acidic residues).

It belongs to the GOLGA6 family.

This is Golgin subfamily A member 6-like protein 2 (GOLGA6L2) from Homo sapiens (Human).